We begin with the raw amino-acid sequence, 260 residues long: Hydroxyethylthiazole kinase 1 (260 aa).

Substrate is bound at residue methionine 39. ATP contacts are provided by arginine 115 and threonine 160. Glycine 187 provides a ligand contact to substrate.

This sequence belongs to the Thz kinase family. Mg(2+) is required as a cofactor.

It catalyses the reaction 5-(2-hydroxyethyl)-4-methylthiazole + ATP = 4-methyl-5-(2-phosphooxyethyl)-thiazole + ADP + H(+). The protein operates within cofactor biosynthesis; thiamine diphosphate biosynthesis; 4-methyl-5-(2-phosphoethyl)-thiazole from 5-(2-hydroxyethyl)-4-methylthiazole: step 1/1. In terms of biological role, catalyzes the phosphorylation of the hydroxyl group of 4-methyl-5-beta-hydroxyethylthiazole (THZ). In Streptococcus pneumoniae serotype 19F (strain G54), this protein is Hydroxyethylthiazole kinase 1.